The following is a 268-amino-acid chain: Nickel import ATP-binding protein NikE (268 aa).

The region spanning 4–252 (LNVSDLSHHY…SSDAGRVLQN (249 aa)) is the ABC transporter domain. Residue 45–52 (GRSGCGKS) participates in ATP binding.

This sequence belongs to the ABC transporter superfamily. Nickel importer (TC 3.A.1.5.3) family. The complex is composed of two ATP-binding proteins (NikD and NikE), two transmembrane proteins (NikB and NikC) and a solute-binding protein (NikA).

The protein localises to the cell inner membrane. The enzyme catalyses Ni(2+)(out) + ATP + H2O = Ni(2+)(in) + ADP + phosphate + H(+). In terms of biological role, part of the ABC transporter complex NikABCDE involved in nickel import. Responsible for energy coupling to the transport system. This chain is Nickel import ATP-binding protein NikE, found in Escherichia coli O157:H7.